A 401-amino-acid chain; its full sequence is Heat shock transcription factor, Y-linked (401 aa).

A compositionally biased stretch (polar residues) spans 1–11 (MAHVSSETQDV). Residues 1–30 (MAHVSSETQDVSPKDELTASEASTRSPLCE) are disordered. The DNA-binding element occupies 76-194 (LSLNFPRKLW…PQLLVRVKRR (119 aa)).

It belongs to the HSF family. Testis-specific. Present in Sertoli cells and spermatogenic cells (at protein level).

The protein localises to the nucleus. It is found in the cytoplasm. The protein is Heat shock transcription factor, Y-linked (HSFY1) of Homo sapiens (Human).